The chain runs to 295 residues: Elongation factor Ts (295 aa).

The tract at residues 79–82 (TDFV) is involved in Mg(2+) ion dislocation from EF-Tu.

This sequence belongs to the EF-Ts family.

It is found in the cytoplasm. Its function is as follows. Associates with the EF-Tu.GDP complex and induces the exchange of GDP to GTP. It remains bound to the aminoacyl-tRNA.EF-Tu.GTP complex up to the GTP hydrolysis stage on the ribosome. This is Elongation factor Ts from Bacillus cereus (strain ATCC 10987 / NRS 248).